Here is a 482-residue protein sequence, read N- to C-terminus: MLLNELLKAIQPVQVTGDSRIEITGVNIDSRLVEAGQLFMAMRGTQTDGHAYIPAAIQKGATAILCEDIPEEPVAGITYIQVKDSEDAVGKIATTFYGNPTSQFELVGVTGTNGKTTIATLLYNTFRYFGYKVGLISTVCNYIDDQPIPTEHTTPDPITLNRLLGQMADEGCKYVFMEVSSHSIAQKRISGLKFAGGIFTNLTRDHLDYHKTVENYLKAKKKFFDDMPKNAFSLTNLDDKNGLVMTQNTRSKVYTYSLRSLSDFKGRVIESHFEGMLLDFNNHELAVQFIGKFNASNLLAVFGAAVLLGKKEEDVLLALSTLHPVAGRFDAIRSPKGVTAIVDYAHTPDALVNVLNAIHGVLEGKGKVITVVGAGGNRDKGKRPIMAKEAAKASDRVIITSDNPRFEEPQEIINDMLAGLDAEDMKKTLSIADRKEAIRTACMLAEKGDVILVAGKGHENYQEIKGVKHHFDDKEVLKEIFN.

Ser30 is a UDP-N-acetyl-alpha-D-muramoyl-L-alanyl-D-glutamate binding site. Gly111–Thr117 provides a ligand contact to ATP. UDP-N-acetyl-alpha-D-muramoyl-L-alanyl-D-glutamate-binding positions include Thr153 to Thr154, Ser180, Gln186, and Arg188. Residue Lys220 is modified to N6-carboxylysine. Meso-2,6-diaminopimelate-binding positions include Arg378, Asp402 to Arg405, Gly455, and Glu459. A Meso-diaminopimelate recognition motif motif is present at residues Asp402 to Arg405.

The protein belongs to the MurCDEF family. MurE subfamily. Mg(2+) is required as a cofactor. In terms of processing, carboxylation is probably crucial for Mg(2+) binding and, consequently, for the gamma-phosphate positioning of ATP.

It localises to the cytoplasm. It catalyses the reaction UDP-N-acetyl-alpha-D-muramoyl-L-alanyl-D-glutamate + meso-2,6-diaminopimelate + ATP = UDP-N-acetyl-alpha-D-muramoyl-L-alanyl-gamma-D-glutamyl-meso-2,6-diaminopimelate + ADP + phosphate + H(+). Its pathway is cell wall biogenesis; peptidoglycan biosynthesis. Its function is as follows. Catalyzes the addition of meso-diaminopimelic acid to the nucleotide precursor UDP-N-acetylmuramoyl-L-alanyl-D-glutamate (UMAG) in the biosynthesis of bacterial cell-wall peptidoglycan. This Bacteroides thetaiotaomicron (strain ATCC 29148 / DSM 2079 / JCM 5827 / CCUG 10774 / NCTC 10582 / VPI-5482 / E50) protein is UDP-N-acetylmuramoyl-L-alanyl-D-glutamate--2,6-diaminopimelate ligase.